The chain runs to 321 residues: uncharacterized protein (321 aa).

Tyrosine 49 serves as the catalytic Proton donor. A substrate-binding site is contributed by histidine 106.

It belongs to the aldo/keto reductase family.

This is an uncharacterized protein from Caenorhabditis elegans.